The chain runs to 121 residues: NADH-quinone oxidoreductase subunit A 2 (121 aa).

3 helical membrane passes run 6-26, 60-80, and 89-109; these read FLPV…TLFV, VPFF…MFLF, and IGFV…VGFA.

Belongs to the complex I subunit 3 family. As to quaternary structure, NDH-1 is composed of 14 different subunits. Subunits NuoA, H, J, K, L, M, N constitute the membrane sector of the complex.

It is found in the cell inner membrane. The catalysed reaction is a quinone + NADH + 5 H(+)(in) = a quinol + NAD(+) + 4 H(+)(out). Its function is as follows. NDH-1 shuttles electrons from NADH, via FMN and iron-sulfur (Fe-S) centers, to quinones in the respiratory chain. The immediate electron acceptor for the enzyme in this species is believed to be ubiquinone. Couples the redox reaction to proton translocation (for every two electrons transferred, four hydrogen ions are translocated across the cytoplasmic membrane), and thus conserves the redox energy in a proton gradient. This Rhizobium meliloti (strain 1021) (Ensifer meliloti) protein is NADH-quinone oxidoreductase subunit A 2.